A 438-amino-acid chain; its full sequence is DEAD-box ATP-dependent RNA helicase 58, chloroplastic (438 aa).

The transit peptide at 1 to 44 (MAAFSGCASPLSTTLRSGLAPFTLRHRLRLRRLRASAATLREVC) directs the protein to the chloroplast. Positions 41-69 (REVCAGRVPEHVLQRAEEVGYVVPTEVQE) match the Q motif motif. Residues 72–245 (LPVLLSGQDC…DCVQHKWTKT (174 aa)) enclose the Helicase ATP-binding domain. An ATP-binding site is contributed by 85–92 (AQTGSGKT). Positions 190–193 (DEVD) match the DEAD box motif. In terms of domain architecture, Helicase C-terminal spans 274–436 (RLHVLLSLLE…ELPVESMFAF (163 aa)).

It belongs to the DEAD box helicase family.

The protein localises to the plastid. It is found in the chloroplast. The enzyme catalyses ATP + H2O = ADP + phosphate + H(+). The chain is DEAD-box ATP-dependent RNA helicase 58, chloroplastic from Oryza sativa subsp. japonica (Rice).